The primary structure comprises 473 residues: Glutamate--tRNA ligase (473 aa).

The short motif at 11-21 (PSPTGFLHIGG) is the 'HIGH' region element. Positions 240–244 (KLSKR) match the 'KMSKS' region motif. Lys243 contacts ATP.

Belongs to the class-I aminoacyl-tRNA synthetase family. Glutamate--tRNA ligase type 1 subfamily. Monomer.

Its subcellular location is the cytoplasm. It carries out the reaction tRNA(Glu) + L-glutamate + ATP = L-glutamyl-tRNA(Glu) + AMP + diphosphate. Its function is as follows. Catalyzes the attachment of glutamate to tRNA(Glu) in a two-step reaction: glutamate is first activated by ATP to form Glu-AMP and then transferred to the acceptor end of tRNA(Glu). This Rhodopseudomonas palustris (strain TIE-1) protein is Glutamate--tRNA ligase.